The primary structure comprises 62 residues: MARYRHSRSRSRSRYRRRRRRRSRYRSRRRRYRGSRRRRSRRRGRRRGYSRRRYSRRRRRRY.

Residues 1–62 (MARYRHSRSR…RYSRRRRRRY (62 aa)) form a disordered region.

Belongs to the protamine P1 family. Testis.

The protein localises to the nucleus. The protein resides in the chromosome. Functionally, protamines substitute for histones in the chromatin of sperm during the haploid phase of spermatogenesis. They compact sperm DNA into a highly condensed, stable and inactive complex. The sequence is that of Sperm protamine P1 (PRM1) from Bettongia penicillata (Brush-tailed bettong).